The primary structure comprises 853 residues: Wolframin (853 aa).

A disordered region spans residues 139-179 (KQLERKMRRIYNLQRKRRRRDDDRSSSSSEGEQEPECEPLE). Positions 144–157 (KMRRIYNLQRKRRR) are enriched in basic residues. Acidic residues predominate over residues 169–179 (GEQEPECEPLE). The next 10 helical transmembrane spans lie at 238–258 (MIFH…NLIV), 259–279 (SIPN…ISWW), 285–305 (LPLV…CKML), 347–367 (LYFF…TDAW), 373–393 (LTII…YASS), 446–466 (FCLN…IMMA), 473–493 (GVYT…VCIA), 513–533 (IVLF…FVAI), 545–565 (WGST…LALN), and 572–592 (ITML…LPYM). N694 and N769 each carry an N-linked (GlcNAc...) asparagine glycan.

In terms of tissue distribution, detected in adult brain.

The protein resides in the membrane. It localises to the endoplasmic reticulum. It is found in the mitochondrion. Participates in the regulation of cellular Ca(2+) homeostasis, at least partly, by modulating the filling state of the endoplasmic reticulum Ca(2+) store. In neurons and glial cells, has a role in maintaining neuronal function and integrity during aging. This is Wolframin from Drosophila melanogaster (Fruit fly).